The following is a 361-amino-acid chain: Chorismate synthase (361 aa).

The interval 37–59 is disordered; that stretch reads TEADLQHDLDRRRPGTSRYTTQR. The segment covering 40 to 49 has biased composition (basic and acidic residues); the sequence is DLQHDLDRRR. Residues Arg48 and Arg54 each contribute to the NADP(+) site. FMN-binding positions include 125–127, 238–239, Gly278, 293–297, and Arg319; these read RSS, NA, and KPTSS.

This sequence belongs to the chorismate synthase family. Homotetramer. The cofactor is FMNH2.

The enzyme catalyses 5-O-(1-carboxyvinyl)-3-phosphoshikimate = chorismate + phosphate. The protein operates within metabolic intermediate biosynthesis; chorismate biosynthesis; chorismate from D-erythrose 4-phosphate and phosphoenolpyruvate: step 7/7. Its function is as follows. Catalyzes the anti-1,4-elimination of the C-3 phosphate and the C-6 proR hydrogen from 5-enolpyruvylshikimate-3-phosphate (EPSP) to yield chorismate, which is the branch point compound that serves as the starting substrate for the three terminal pathways of aromatic amino acid biosynthesis. This reaction introduces a second double bond into the aromatic ring system. The chain is Chorismate synthase from Serratia proteamaculans (strain 568).